Here is a 771-residue protein sequence, read N- to C-terminus: MTAPEQPVKQEEMAALDVDSSGHGEYLQHGNGNASASAAAAAPQDAQPSPLALLAATCSKIGPPSPEEDEAAAAAASHSAGATGDLASVQLAGTPNRWEVLSAAPATIKDEAGNIVQIPGAATVTSSGQYVLPIQSLQNQQIFSVAPGSDSSNGTVSNVQYQVIPQIQTADGQQVQLGFAASSDNSSINQETGQIQIIPGSNQTIIASGSPSANIQNILSQSGQVQVQGVAIGGSSFPGQAQVVANVPLGLPGNITFVPINSVDLDSLGLGSGSQTMTAGINADGHLINTGQAMDSSDNSERTGEQVSPEITETATDNDLFVPTSSSSQLPVTIDSSSILEQNANNLTTTSGQVHSSDLQGNYIQTSVSDDTQAQNIQVSTAQPIVQHIQLQESQQPTSQAQIVQGIAQQTIHGVQASQSISPQALQNLQLQLNPGTFLIQAQTVTPSGQITWQTFQVQGVQNLQNLQIQNAPGQQITLTPVQTLTLGQVAAGGALTSTPVSLSTAQLPNLQTVTVNSIDSAGIQLHQGENAGSPADIRIKEEEPDPEEWQLSGDSTLNTNDLTHLRVQVVDEEGDQPHQEGKRLRRVACTCPNCKEGGGRGSNLGKKKQHICHIPGCGKVYGKTSHLRAHLRWHSGERPFVCNWMFCGKRFTRSDELQRHRRTHTGEKKFVCPECSKRFMRSDHLAKHIKTHQNKKGIHSSSTVLASVEATSDDTLITAGGTTLILANIQQGSVSGIGTVNTSGTSNQDILTNTEIPLQLVTVSGNETME.

Disordered regions lie at residues 1 to 47 and 60 to 79; these read MTAP…QDAQ and KIGP…ASHS. Positions 34–47 are enriched in low complexity; sequence ASASAAAAAPQDAQ. A Glycyl lysine isopeptide (Lys-Gly) (interchain with G-Cter in SUMO) cross-link involves residue lysine 109. 2 transactivation domain (Gln-rich) regions span residues 129–228 and 341–489; these read QYVL…VQVQ and EQNA…TLGQ. The 9aaTAD signature appears at 451–459; sequence ITWQTFQVQ. The segment at 524 to 610 is repressor domain; the sequence is IQLHQGENAG…RGSNLGKKKQ (87 aa). Position 541 is an N6-acetyllysine; alternate (lysine 541). Lysine 541 participates in a covalent cross-link: Glycyl lysine isopeptide (Lys-Gly) (interchain with G-Cter in SUMO); alternate. C2H2-type zinc fingers lie at residues 611–635, 641–665, and 671–693; these read HICH…LRWH, FVCN…RRTH, and FVCP…IKTH.

The protein belongs to the Sp1 C2H2-type zinc-finger protein family. As to quaternary structure, interacts with HDAC1 and HDAC2; the interaction deacetylates SP3 and regulates its transcriptional activity. Interacts with v-Jun. Acetylated by histone acetyltransferase p300, deacetylated by HDACs. Acetylation/deacetylation states regulate transcriptional activity. Acetylation appears to activate transcription. Alternate sumoylation and acetylation at Lys-541 also control transcriptional activity. Post-translationally, sumoylation represses transcriptional activity. Lys-541 is the major site. Sumoylation at this site promotes nuclear localization to the nuclear periphery, nuclear dots and PML nuclear bodies. Alternate sumoylation and acetylation at Lys-541 also control transcriptional activity.

It is found in the nucleus. It localises to the PML body. Its function is as follows. Transcriptional factor that can act as an activator or repressor depending on post-translational modifications. Binds to GT and GC boxes promoter elements. Competes with SP1 for the GC-box promoters. Weak activator of transcription. Required for activation of SPARC transcription. The polypeptide is Transcription factor Sp3 (SP3) (Gallus gallus (Chicken)).